The sequence spans 811 residues: U-box domain-containing protein 43 (811 aa).

The U-box domain occupies 24 to 103 (NIYEAFICPL…EEWRARNDAL (80 aa)). 9 ARM repeats span residues 136–175 (RKIR…VVVE), 178–217 (EESK…ELSK), 220–261 (ALCE…NLER), 263–302 (EENV…VLAL), 303–342 (NNDV…NISS), 344–388 (EGSA…NIVN), 399–438 (GPHH…GLTS), 444–484 (INVV…NISP), and 489–528 (ELAN…LLAE).

The catalysed reaction is S-ubiquitinyl-[E2 ubiquitin-conjugating enzyme]-L-cysteine + [acceptor protein]-L-lysine = [E2 ubiquitin-conjugating enzyme]-L-cysteine + N(6)-ubiquitinyl-[acceptor protein]-L-lysine.. The protein operates within protein modification; protein ubiquitination. Its function is as follows. Functions as an E3 ubiquitin ligase. This chain is U-box domain-containing protein 43 (PUB43), found in Arabidopsis thaliana (Mouse-ear cress).